Here is an 861-residue protein sequence, read N- to C-terminus: Leucine--tRNA ligase (861 aa).

Positions 43-53 (PYPSGKLHMGH) match the 'HIGH' region motif. The 'KMSKS' region signature appears at 588–592 (KMSKS). Position 591 (lysine 591) interacts with ATP.

It belongs to the class-I aminoacyl-tRNA synthetase family.

It localises to the cytoplasm. The enzyme catalyses tRNA(Leu) + L-leucine + ATP = L-leucyl-tRNA(Leu) + AMP + diphosphate. The protein is Leucine--tRNA ligase of Symbiobacterium thermophilum (strain DSM 24528 / JCM 14929 / IAM 14863 / T).